The primary structure comprises 271 residues: Undecaprenyl-diphosphatase 2 (271 aa).

Helical transmembrane passes span 1 to 21 (MNFF…LFPI), 46 to 66 (NFLE…IVYF), 88 to 108 (ALIV…EQTI), 111 to 131 (AFSD…LLFF), 146 to 166 (LKGW…IPGF), 190 to 210 (SMLL…PKLI), 220 to 240 (LSLI…YILM), and 251 to 271 (MLPF…SKAI).

This sequence belongs to the UppP family.

The protein resides in the cell membrane. It carries out the reaction di-trans,octa-cis-undecaprenyl diphosphate + H2O = di-trans,octa-cis-undecaprenyl phosphate + phosphate + H(+). Functionally, catalyzes the dephosphorylation of undecaprenyl diphosphate (UPP). Confers resistance to bacitracin. This is Undecaprenyl-diphosphatase 2 from Oenococcus oeni (strain ATCC BAA-331 / PSU-1).